The following is a 269-amino-acid chain: Mitochondrial distribution and morphology protein 12 (269 aa).

The 269-residue stretch at 1 to 269 (MSLEVNWEQI…WPNWIEFQGV (269 aa)) folds into the SMP-LTD domain. The interval 72–119 (ERAGTGEGDEDDGRVAPTSTPMKHQTSGSSDQTDASNPISPSTSHDHE) is disordered. Residues 88–114 (PTSTPMKHQTSGSSDQTDASNPISPST) are compositionally biased toward polar residues.

This sequence belongs to the MDM12 family. Component of the ER-mitochondria encounter structure (ERMES) or MDM complex, composed of MMM1, MDM10, MDM12 and MDM34. An MMM1 homodimer associates with one molecule of MDM12 on each side in a pairwise head-to-tail manner, and the SMP-LTD domains of MMM1 and MDM12 generate a continuous hydrophobic tunnel for phospholipid trafficking.

It is found in the mitochondrion outer membrane. Its subcellular location is the endoplasmic reticulum membrane. Component of the ERMES/MDM complex, which serves as a molecular tether to connect the endoplasmic reticulum (ER) and mitochondria. Components of this complex are involved in the control of mitochondrial shape and protein biogenesis, and function in nonvesicular lipid trafficking between the ER and mitochondria. MDM12 is required for the interaction of the ER-resident membrane protein MMM1 and the outer mitochondrial membrane-resident beta-barrel protein MDM10. The MDM12-MMM1 subcomplex functions in the major beta-barrel assembly pathway that is responsible for biogenesis of all mitochondrial outer membrane beta-barrel proteins, and acts in a late step after the SAM complex. The MDM10-MDM12-MMM1 subcomplex further acts in the TOM40-specific pathway after the action of the MDM12-MMM1 complex. Essential for establishing and maintaining the structure of mitochondria and maintenance of mtDNA nucleoids. In Komagataella phaffii (strain GS115 / ATCC 20864) (Yeast), this protein is Mitochondrial distribution and morphology protein 12.